The following is a 68-amino-acid chain: Non-specific lipid-transfer protein 2 (68 aa).

This sequence belongs to the plant LTP family.

Its function is as follows. Plant non-specific lipid-transfer proteins transfer phospholipids as well as galactolipids across membranes. May play a role in wax or cutin deposition in the cell walls of expanding epidermal cells and certain secretory tissues. The polypeptide is Non-specific lipid-transfer protein 2 (Prunus armeniaca (Apricot)).